Here is a 147-residue protein sequence, read N- to C-terminus: UPF0306 protein YPTB0506 (147 aa).

The protein belongs to the UPF0306 family.

In Yersinia pseudotuberculosis serotype I (strain IP32953), this protein is UPF0306 protein YPTB0506.